The following is a 260-amino-acid chain: Homeobox protein Hox-D11b (260 aa).

The span at 1-14 shows a compositional bias: low complexity; the sequence is MFSSSFSYPSKTSP. 2 disordered regions span residues 1–21 and 151–206; these read MFSS…PFLA and ITPG…CTRR. Residues 167–179 show a composition bias toward basic and acidic residues; that stretch reads RSPDGESSEERAG. Residues 205–260 constitute a DNA-binding region (homeobox; truncated); the sequence is RRKKRCPYSKQQIIELEREFLFNIYINKDRRMQLSHLLRLTDRCVNNPLNQDSFFT.

This sequence belongs to the Abd-B homeobox family.

It is found in the nucleus. In terms of biological role, sequence-specific transcription factor which is part of a developmental regulatory system that provides cells with specific positional identities on the anterior-posterior axis. The polypeptide is Homeobox protein Hox-D11b (hoxd11b) (Takifugu rubripes (Japanese pufferfish)).